The sequence spans 120 residues: Ribosome-binding factor A (120 aa).

It belongs to the RbfA family. As to quaternary structure, monomer. Binds 30S ribosomal subunits, but not 50S ribosomal subunits or 70S ribosomes.

The protein localises to the cytoplasm. In terms of biological role, one of several proteins that assist in the late maturation steps of the functional core of the 30S ribosomal subunit. Associates with free 30S ribosomal subunits (but not with 30S subunits that are part of 70S ribosomes or polysomes). Required for efficient processing of 16S rRNA. May interact with the 5'-terminal helix region of 16S rRNA. This Clostridium botulinum (strain ATCC 19397 / Type A) protein is Ribosome-binding factor A.